Here is a 156-residue protein sequence, read N- to C-terminus: Small ribosomal subunit protein uS7 (156 aa).

It belongs to the universal ribosomal protein uS7 family. In terms of assembly, part of the 30S ribosomal subunit. Contacts proteins S9 and S11.

Functionally, one of the primary rRNA binding proteins, it binds directly to 16S rRNA where it nucleates assembly of the head domain of the 30S subunit. Is located at the subunit interface close to the decoding center, probably blocks exit of the E-site tRNA. In Rhizobium leguminosarum bv. trifolii (strain WSM2304), this protein is Small ribosomal subunit protein uS7.